Reading from the N-terminus, the 699-residue chain is Methylcrotonoyl-CoA carboxylase subunit alpha, mitochondrial (699 aa).

The Biotin carboxylation domain maps to Ile30 to Glu475. ATP-binding residues include Lys144, Glu228, and His263. The region spanning Lys148–Glu345 is the ATP-grasp domain. Arg320 is an active-site residue. The region spanning Lys624–Val699 is the Biotinyl-binding domain. The residue at position 665 (Lys665) is an N6-biotinyllysine.

As to quaternary structure, probably a dodecamer composed of six biotin-containing alpha subunits and six beta subunits. It depends on Mn(2+) as a cofactor. Biotin serves as cofactor.

It localises to the mitochondrion matrix. The catalysed reaction is 3-methylbut-2-enoyl-CoA + hydrogencarbonate + ATP = 3-methyl-(2E)-glutaconyl-CoA + ADP + phosphate + H(+). Its pathway is amino-acid degradation; L-leucine degradation; (S)-3-hydroxy-3-methylglutaryl-CoA from 3-isovaleryl-CoA: step 2/3. Its function is as follows. Biotin-attachment subunit of the 3-methylcrotonyl-CoA carboxylase, an enzyme that catalyzes the conversion of 3-methylcrotonyl-CoA to 3-methylglutaconyl-CoA, a critical step for leucine and isovaleric acid catabolism. This Dictyostelium discoideum (Social amoeba) protein is Methylcrotonoyl-CoA carboxylase subunit alpha, mitochondrial (mccA).